Consider the following 115-residue polypeptide: Large ribosomal subunit protein uL18 (115 aa).

It belongs to the universal ribosomal protein uL18 family. Part of the 50S ribosomal subunit; part of the 5S rRNA/L5/L18/L25 subcomplex. Contacts the 5S and 23S rRNAs.

Its function is as follows. This is one of the proteins that bind and probably mediate the attachment of the 5S RNA into the large ribosomal subunit, where it forms part of the central protuberance. This chain is Large ribosomal subunit protein uL18, found in Rickettsia rickettsii (strain Iowa).